Consider the following 391-residue polypeptide: Probable protein phosphatase 2C 32 (391 aa).

The segment at M1–R53 is disordered. Positions P8–P51 are enriched in low complexity. The chain crosses the membrane as a helical span at residues L95–V115. Residues E129 to L386 enclose the PPM-type phosphatase domain. Residues D168, G169, D332, and D377 each coordinate Mn(2+).

The protein belongs to the PP2C family. It depends on Mg(2+) as a cofactor. The cofactor is Mn(2+).

The protein resides in the membrane. The enzyme catalyses O-phospho-L-seryl-[protein] + H2O = L-seryl-[protein] + phosphate. It carries out the reaction O-phospho-L-threonyl-[protein] + H2O = L-threonyl-[protein] + phosphate. This Oryza sativa subsp. japonica (Rice) protein is Probable protein phosphatase 2C 32.